A 360-amino-acid polypeptide reads, in one-letter code: S-adenosylmethionine-dependent nucleotide dehydratase RSAD2 (360 aa).

Positions 44-71 are disordered; sequence KGQPRVRGEPKETQETHEDPGSAQPTTP. The segment covering 49 to 63 has biased composition (basic and acidic residues); it reads VRGEPKETQETHEDP. The Radical SAM core domain maps to 68 to 288; the sequence is PTTPVSVNYH…LQRHKDVSCL (221 aa). Residues cysteine 82, cysteine 86, and cysteine 89 each coordinate [4Fe-4S] cluster. Lysine 196 is modified (N6-acetyllysine). Lysine 205 is covalently cross-linked (Glycyl lysine isopeptide (Lys-Gly) (interchain with G-Cter in ubiquitin)).

Belongs to the radical SAM superfamily. RSAD2 family. Homodimer. Interacts with IRAK1 and TRAF6. Interacts with FPPS. Interacts with HADHB. Interacts (via C-terminus) with VAPA/VAP33 (via C-terminus). It depends on [4Fe-4S] cluster as a cofactor. Post-translationally, acetylated by HAT1. HAT1-mediated acetylation of Lys-196 in turn recruits UBE4A that stimulates RSAD2 polyubiquitination leading to proteasomal degradation. 'Lys-6'-linked polyubiquitination at Lys-205 leads to RSAD2 protein degradation. In terms of tissue distribution, in neonatal rat tibia, specifically localized in cells of the periosteum, in osteoblasts lining endosteal and peristeal bone surfaces, to articular surfaces of cartilage and in perichondral cells but not in chondrocytes (at protein level). Expressed predominantly in bone marrow and spleen.

It localises to the endoplasmic reticulum membrane. Its subcellular location is the golgi apparatus. The protein resides in the endoplasmic reticulum. The protein localises to the lipid droplet. It is found in the mitochondrion. It localises to the mitochondrion inner membrane. Its subcellular location is the mitochondrion outer membrane. The catalysed reaction is CTP + AH2 + S-adenosyl-L-methionine = 3'-deoxy-3',4'-didehydro-CTP + 5'-deoxyadenosine + L-methionine + A + H2O + H(+). Its activity is regulated as follows. IRAK1 and TRAF6 synergistically activate RSAD2 increasing its activity with CTP as substrate about 10-fold. Interferon-inducible antiviral protein which plays a major role in the cell antiviral state induced by type I and type II interferon. Catalyzes the conversion of cytidine triphosphate (CTP) to 3'-deoxy-3',4'-didehydro-CTP (ddhCTP) via a SAM-dependent radical mechanism. In turn, ddhCTP acts as a chain terminator for the RNA-dependent RNA polymerases from multiple viruses and directly inhibits viral replication. Therefore, inhibits a wide range of DNA and RNA viruses. Also promotes TLR7 and TLR9-dependent production of IFN-beta production in plasmacytoid dendritic cells (pDCs) by facilitating 'Lys-63'-linked ubiquitination of IRAK1 by TRAF6. Plays a role in CD4+ T-cells activation and differentiation. Facilitates T-cell receptor (TCR)-mediated GATA3 activation and optimal T-helper 2 (Th2) cytokine production by modulating NFKB1 and JUNB activities. Can inhibit secretion of soluble proteins. The sequence is that of S-adenosylmethionine-dependent nucleotide dehydratase RSAD2 from Rattus norvegicus (Rat).